We begin with the raw amino-acid sequence, 910 residues long: Periodic tryptophan protein 2 homolog (910 aa).

WD repeat units lie at residues 12 to 50 (GTVY…SKTL), 53 to 92 (DCNY…KIYT), 94 to 134 (RSNK…KVYN), 144 to 183 (LSSD…NLFI), 188 to 227 (SHKG…GELV), 271 to 310 (GKSV…LVHN), 313 to 355 (VSEM…YVMK), 358 to 397 (AHSL…CTVT), 400 to 439 (EHTS…NFRT), 443 to 485 (PEPT…DILS), 486 to 523 (GHES…AETV), 525 to 563 (VSHE…NLGS), 586 to 625 (AKTK…ILKK), and 688 to 728 (RPEV…DPFQ). The disordered stretch occupies residues 867 to 910 (SKKSVKKEEEEEEDVSDESDDEDIEDESAGSDDEDSDDSVEIIE). Acidic residues predominate over residues 875–910 (EEEEEDVSDESDDEDIEDESAGSDDEDSDDSVEIIE).

Belongs to the WD repeat PWP2 family.

The sequence is that of Periodic tryptophan protein 2 homolog from Caenorhabditis elegans.